Consider the following 193-residue polypeptide: dCTP deaminase (193 aa).

DCTP contacts are provided by residues 110–115 (RSSLAR), Asp-128, 136–138 (VLE), Tyr-171, Lys-178, and Gln-182. Glu-138 (proton donor/acceptor) is an active-site residue. The tract at residues 169–193 (RPYNRRQDAKYKDQQGAVASRIDKD) is disordered.

Belongs to the dCTP deaminase family. Homotrimer.

The catalysed reaction is dCTP + H2O + H(+) = dUTP + NH4(+). It functions in the pathway pyrimidine metabolism; dUMP biosynthesis; dUMP from dCTP (dUTP route): step 1/2. Catalyzes the deamination of dCTP to dUTP. This Pectobacterium atrosepticum (strain SCRI 1043 / ATCC BAA-672) (Erwinia carotovora subsp. atroseptica) protein is dCTP deaminase.